The sequence spans 640 residues: Insulin-like growth factor 1 receptor (640 aa).

2 Fibronectin type-III domains span residues 5-101 (VPRP…TMPA) and 107-200 (IPGP…VQAK). At 14–208 (EVMQIANTTM…AKTTYENFIH (195 aa)) the chain is on the extracellular side. Residues N20, N29, N37, N173, and N186 are each glycosylated (N-linked (GlcNAc...) asparagine). The chain crosses the membrane as a helical span at residues 209–232 (LMIALPIAVLLIVGGLVIMLYVFH). At 233–640 (RKRNSSRLGN…ALPLPQSSTC (408 aa)) the chain is on the cytoplasmic side. The short motif at 250 to 253 (NPEY) is the IRS1- and SHC1-binding element. The residue at position 253 (Y253) is a Phosphotyrosine. Residues 272 to 547 (ITMSRELGQG…SVKDEMEAGF (276 aa)) enclose the Protein kinase domain. Residues 278-286 (LGQGSFGMV) and K306 each bind ATP. D408 functions as the Proton acceptor in the catalytic mechanism. Residues Y434, Y438, and Y439 each carry the phosphotyrosine; by autocatalysis modification. Glycyl lysine isopeptide (Lys-Gly) (interchain with G-Cter in ubiquitin) cross-links involve residues K441 and K444. The residue at position 551 (S551) is a Phosphoserine; by GSK3-beta. A Phosphoserine modification is found at S555. The disordered stretch occupies residues 555-640 (SEENKPPEPE…ALPLPQSSTC (86 aa)). Residues 563-572 (PEELDLEPEN) show a composition bias toward acidic residues. The segment covering 573-589 (MESVPLDPSASSASLPL) has biased composition (low complexity). The span at 590-599 (PDRHSGHKAE) shows a compositional bias: basic and acidic residues.

It belongs to the protein kinase superfamily. Tyr protein kinase family. Insulin receptor subfamily. In terms of assembly, tetramer of 2 alpha and 2 beta chains linked by disulfide bonds. The alpha chains contribute to the formation of the ligand-binding domain, while the beta chain carries the kinase domain. Interacts with PIK3R1 and with the PTB/PID domains of IRS1 and SHC1 in vitro when autophosphorylated on tyrosine residues. Forms a hybrid receptor with INSR, the hybrid is a tetramer consisting of 1 alpha chain and 1 beta chain of INSR and 1 alpha chain and 1 beta chain of IGF1R. Interacts with ARRB1 and ARRB2. Interacts with GRB10. Interacts with RACK1. Interacts with SOCS1, SOCS2 and SOCS3. Interacts with 14-3-3 proteins. Interacts with NMD2. Interacts with MAP3K5. Interacts with STAT3. Interacts (nascent precursor form) with ZFAND2B. Autophosphorylated on tyrosine residues in response to ligand binding. Autophosphorylation occurs in trans, i.e. one subunit of the dimeric receptor phosphorylates tyrosine residues on the other subunit. Autophosphorylation occurs in a sequential manner; Tyr-438 is predominantly phosphorylated first, followed by phosphorylation of Tyr-434 and Tyr-439. While every single phosphorylation increases kinase activity, all three tyrosine residues in the kinase activation loop (Tyr-438, Tyr-434 and Tyr-439) have to be phosphorylated for optimal activity. Can be autophosphorylated at additional tyrosine residues (in vitro). Autophosphorylated is followed by phosphorylation of juxtamembrane tyrosines and C-terminal serines. May also be phosphorylated at Tyr-434 and Tyr-439 by mTORC2. Phosphorylation of Tyr-253 is required for IRS1- and SHC1-binding. Phosphorylation of Ser-551 by GSK-3beta restrains kinase activity and promotes cell surface expression, it requires a priming phosphorylation at Ser-555. Dephosphorylated by PTPN1. Post-translationally, polyubiquitinated at Lys-441 and Lys-444 through both 'Lys-48' and 'Lys-29' linkages, promoting receptor endocytosis and subsequent degradation by the proteasome. Ubiquitination is facilitated by pre-existing phosphorylation. In terms of processing, sumoylated with SUMO1. Controlled by regulated intramembrane proteolysis (RIP). Undergoes metalloprotease-dependent constitutive ectodomain shedding to produce a membrane-anchored 52 kDa C-Terminal fragment which is further processed by presenilin gamma-secretase to yield an intracellular 50 kDa fragment.

It localises to the cell membrane. The enzyme catalyses L-tyrosyl-[protein] + ATP = O-phospho-L-tyrosyl-[protein] + ADP + H(+). Activated by autophosphorylation at Tyr-434, Tyr-438 and Tyr-439 on the kinase activation loop; phosphorylation at all three tyrosine residues is required for optimal kinase activity. Inhibited by MSC1609119A-1, BMS-754807, PQIP, benzimidazole pyridinone, isoquinolinedione, bis-azaindole, 3-cyanoquinoline, 2,4-bis-arylamino-1,3-pyrimidine, pyrrolopyrimidine, pyrrole-5-carboxaldehyde, picropodophyllin (PPP), tyrphostin derivatives. While most inhibitors bind to the ATP binding pocket, MSC1609119A-1 functions as allosteric inhibitor and binds close to the DFG motif and the activation loop. Receptor tyrosine kinase which mediates actions of insulin-like growth factor 1 (IGF1). Binds IGF1 with high affinity and IGF2 and insulin (INS) with a lower affinity. The activated IGF1R is involved in cell growth and survival control. IGF1R is crucial for tumor transformation and survival of malignant cell. Ligand binding activates the receptor kinase, leading to receptor autophosphorylation, and tyrosines phosphorylation of multiple substrates, that function as signaling adapter proteins including, the insulin-receptor substrates (IRS1/2), Shc and 14-3-3 proteins. Phosphorylation of IRSs proteins lead to the activation of two main signaling pathways: the PI3K-AKT/PKB pathway and the Ras-MAPK pathway. The result of activating the MAPK pathway is increased cellular proliferation, whereas activating the PI3K pathway inhibits apoptosis and stimulates protein synthesis. Phosphorylated IRS1 can activate the 85 kDa regulatory subunit of PI3K (PIK3R1), leading to activation of several downstream substrates, including protein AKT/PKB. AKT phosphorylation, in turn, enhances protein synthesis through mTOR activation and triggers the antiapoptotic effects of IGFIR through phosphorylation and inactivation of BAD. In parallel to PI3K-driven signaling, recruitment of Grb2/SOS by phosphorylated IRS1 or Shc leads to recruitment of Ras and activation of the ras-MAPK pathway. In addition to these two main signaling pathways IGF1R signals also through the Janus kinase/signal transducer and activator of transcription pathway (JAK/STAT). Phosphorylation of JAK proteins can lead to phosphorylation/activation of signal transducers and activators of transcription (STAT) proteins. In particular activation of STAT3, may be essential for the transforming activity of IGF1R. The JAK/STAT pathway activates gene transcription and may be responsible for the transforming activity. JNK kinases can also be activated by the IGF1R. IGF1 exerts inhibiting activities on JNK activation via phosphorylation and inhibition of MAP3K5/ASK1, which is able to directly associate with the IGF1R. When present in a hybrid receptor with INSR, binds IGF1. The polypeptide is Insulin-like growth factor 1 receptor (IGF1R) (Bos taurus (Bovine)).